The primary structure comprises 229 residues: Small ribosomal subunit protein uS3 (229 aa).

The KH type-2 domain occupies Ile-18 to Glu-87.

It belongs to the universal ribosomal protein uS3 family. As to quaternary structure, part of the 30S ribosomal subunit.

In terms of biological role, binds the lower part of the 30S subunit head. The polypeptide is Small ribosomal subunit protein uS3 (Saccharolobus solfataricus (strain ATCC 35092 / DSM 1617 / JCM 11322 / P2) (Sulfolobus solfataricus)).